Here is a 147-residue protein sequence, read N- to C-terminus: Hemoglobin subunit epsilon (147 aa).

The 145-residue stretch at 3–147 (HFTAEEKAAV…VAIALAHKYH (145 aa)) folds into the Globin domain. Ser14 and Ser51 each carry phosphoserine. Heme b-binding residues include His64 and His93.

This sequence belongs to the globin family. In terms of assembly, heterotetramer of two alpha chains and two epsilon chains in early embryonic hemoglobin Gower-2; two zeta chains and two epsilon chains in early embryonic hemoglobin Gower-1. As to expression, red blood cells.

Its function is as follows. The epsilon chain is a beta-type chain of early mammalian embryonic hemoglobin. In Symphalangus syndactylus (Siamang), this protein is Hemoglobin subunit epsilon (HBE1).